The sequence spans 340 residues: UDP-3-O-acylglucosamine N-acyltransferase (340 aa).

Histidine 237 (proton acceptor) is an active-site residue.

This sequence belongs to the transferase hexapeptide repeat family. LpxD subfamily. Homotrimer.

It carries out the reaction a UDP-3-O-[(3R)-3-hydroxyacyl]-alpha-D-glucosamine + a (3R)-hydroxyacyl-[ACP] = a UDP-2-N,3-O-bis[(3R)-3-hydroxyacyl]-alpha-D-glucosamine + holo-[ACP] + H(+). It functions in the pathway bacterial outer membrane biogenesis; LPS lipid A biosynthesis. Catalyzes the N-acylation of UDP-3-O-acylglucosamine using 3-hydroxyacyl-ACP as the acyl donor. Is involved in the biosynthesis of lipid A, a phosphorylated glycolipid that anchors the lipopolysaccharide to the outer membrane of the cell. The sequence is that of UDP-3-O-acylglucosamine N-acyltransferase from Desulfosudis oleivorans (strain DSM 6200 / JCM 39069 / Hxd3) (Desulfococcus oleovorans).